We begin with the raw amino-acid sequence, 307 residues long: Type 2A encapsulin shell protein (307 aa).

It belongs to the encapsulin family. Family 2A subfamily. In terms of assembly, homooligomeric. The encapsulin nanocompartment is formed by 60 subunits; monomers form pentamers which assemble to form shells. There are 12 charged pores where the pentamers meet as well as 3-fold axis channels and dimer channels.

The protein resides in the encapsulin nanocompartment. Its function is as follows. Shell component of a type 2A encapsulin nanocompartment. Forms encapsulin nanocompartments about 24 nm in diameter from 60 monomers. Probably encapsulates at least cysteine desulfurase (CyD) and allows passage of cysteine into its interior, probably involved in sulfur metabolism. The polypeptide is Type 2A encapsulin shell protein (Mycobacterium avium).